The chain runs to 251 residues: Chorismate mutase (251 aa).

Positions 1 to 251 (MSLVNEKLKL…EVDYLLARLL (251 aa)) constitute a Chorismate mutase domain. The L-tyrosine site is built by arginine 74, arginine 75, asparagine 134, glycine 136, and serine 137. Positions 134, 136, and 137 each coordinate L-tryptophan.

As to quaternary structure, homodimer.

It localises to the cytoplasm. The enzyme catalyses chorismate = prephenate. The protein operates within metabolic intermediate biosynthesis; prephenate biosynthesis; prephenate from chorismate: step 1/1. Its activity is regulated as follows. Each dimer has two allosteric binding sites that can bind the regulatory effectors tryptophan or tyrosine. Can bind either one tryptophan or one tyrosine, two tryptophan or two tyrosine or one tryptophan and one tyrosine, which differentially affect the catalytic activity. Activated by tryptophan and subject to feedback inhibition by tyrosine. In the presence of both tryptophan and tyrosine, the enzyme is in the activated state. Functionally, catalyzes the Claisen rearrangement of chorismate to prephenate. Acts at the first branch point in the aromatic amino acid pathway where it steers biosynthesis towards phenylalanine and tyrosine, and away from tryptophan. This is Chorismate mutase from Schizosaccharomyces pombe (strain 972 / ATCC 24843) (Fission yeast).